Reading from the N-terminus, the 186-residue chain is TATA-box-binding protein F (186 aa).

Repeat copies occupy residues 10 to 86 (IENV…FDDL) and 101 to 179 (VQNI…NDRL).

The protein belongs to the TBP family.

In terms of biological role, general factor that plays a role in the activation of archaeal genes transcribed by RNA polymerase. Binds specifically to the TATA box promoter element which lies close to the position of transcription initiation. The polypeptide is TATA-box-binding protein F (tbpF) (Halobacterium salinarum (strain ATCC 700922 / JCM 11081 / NRC-1) (Halobacterium halobium)).